A 440-amino-acid chain; its full sequence is C-terminal-binding protein 1 (440 aa).

NAD(+)-binding positions include serine 100, 180–185 (IGLGRV), aspartate 204, 237–243 (CGLNEHN), 264–266 (TAR), and aspartate 290. Arginine 266 is a catalytic residue. Glutamate 295 is an active-site residue. Histidine 315 (proton donor) is an active-site residue. 315 to 318 (HAAW) lines the NAD(+) pocket. The tract at residues 409–440 (HAHPAVAHPPHAPSPGQTIKPEADRDHPSDQL) is disordered. Residues 429–440 (PEADRDHPSDQL) are compositionally biased toward basic and acidic residues.

The protein belongs to the D-isomer specific 2-hydroxyacid dehydrogenase family. The cofactor is NAD(+).

It localises to the nucleus. Its function is as follows. Corepressor targeting diverse transcription regulators. Has dehydrogenase activity. In Xenopus laevis (African clawed frog), this protein is C-terminal-binding protein 1 (ctbp1).